The following is a 355-amino-acid chain: UDP-N-acetylglucosamine--N-acetylmuramyl-(pentapeptide) pyrophosphoryl-undecaprenol N-acetylglucosamine transferase (355 aa).

UDP-N-acetyl-alpha-D-glucosamine-binding positions include 15-17 (TGG), Asn-127, Arg-163, Ser-191, Ile-244, 263-268 (ALTVSE), and Gln-288.

This sequence belongs to the glycosyltransferase 28 family. MurG subfamily.

It is found in the cell inner membrane. It catalyses the reaction di-trans,octa-cis-undecaprenyl diphospho-N-acetyl-alpha-D-muramoyl-L-alanyl-D-glutamyl-meso-2,6-diaminopimeloyl-D-alanyl-D-alanine + UDP-N-acetyl-alpha-D-glucosamine = di-trans,octa-cis-undecaprenyl diphospho-[N-acetyl-alpha-D-glucosaminyl-(1-&gt;4)]-N-acetyl-alpha-D-muramoyl-L-alanyl-D-glutamyl-meso-2,6-diaminopimeloyl-D-alanyl-D-alanine + UDP + H(+). It participates in cell wall biogenesis; peptidoglycan biosynthesis. Functionally, cell wall formation. Catalyzes the transfer of a GlcNAc subunit on undecaprenyl-pyrophosphoryl-MurNAc-pentapeptide (lipid intermediate I) to form undecaprenyl-pyrophosphoryl-MurNAc-(pentapeptide)GlcNAc (lipid intermediate II). This Salmonella paratyphi B (strain ATCC BAA-1250 / SPB7) protein is UDP-N-acetylglucosamine--N-acetylmuramyl-(pentapeptide) pyrophosphoryl-undecaprenol N-acetylglucosamine transferase.